The primary structure comprises 655 residues: Acetyl-coenzyme A synthetase (655 aa).

Residues 196-199 (RGGR) and threonine 316 each bind CoA. ATP contacts are provided by residues 392-394 (GEP), 416-421 (DTWWQT), aspartate 508, and arginine 523. Serine 531 contributes to the CoA binding site. Arginine 534 serves as a coordination point for ATP. Positions 545, 547, and 550 each coordinate Mg(2+). Position 620 is an N6-acetyllysine (lysine 620).

It belongs to the ATP-dependent AMP-binding enzyme family. Mg(2+) serves as cofactor. In terms of processing, acetylated. Deacetylation by the SIR2-homolog deacetylase activates the enzyme.

The enzyme catalyses acetate + ATP + CoA = acetyl-CoA + AMP + diphosphate. Its function is as follows. Catalyzes the conversion of acetate into acetyl-CoA (AcCoA), an essential intermediate at the junction of anabolic and catabolic pathways. AcsA undergoes a two-step reaction. In the first half reaction, AcsA combines acetate with ATP to form acetyl-adenylate (AcAMP) intermediate. In the second half reaction, it can then transfer the acetyl group from AcAMP to the sulfhydryl group of CoA, forming the product AcCoA. This is Acetyl-coenzyme A synthetase from Nitrosomonas europaea (strain ATCC 19718 / CIP 103999 / KCTC 2705 / NBRC 14298).